A 125-amino-acid polypeptide reads, in one-letter code: Glycine cleavage system H protein (125 aa).

The 83-residue stretch at 22 to 104 folds into the Lipoyl-binding domain; the sequence is SYVIGITDFA…YDTGWILKLE (83 aa). The residue at position 63 (K63) is an N6-lipoyllysine.

Belongs to the GcvH family. The glycine cleavage system is composed of four proteins: P, T, L and H. Requires (R)-lipoate as cofactor.

Its function is as follows. The glycine cleavage system catalyzes the degradation of glycine. The H protein shuttles the methylamine group of glycine from the P protein to the T protein. Functionally, is also involved in protein lipoylation via its role as an octanoyl/lipoyl carrier protein intermediate. The chain is Glycine cleavage system H protein from Listeria monocytogenes serotype 4a (strain HCC23).